The following is a 379-amino-acid chain: Carboxypeptidase Y-deficient protein 8 (379 aa).

Low complexity predominate over residues 84-107 (HGSGNSSSKKVTSSTSSSSSNGSV). The disordered stretch occupies residues 84–108 (HGSGNSSSKKVTSSTSSSSSNGSVD). Serine 216 is modified (phosphoserine).

Belongs to the VPS26 family. In terms of assembly, component of the retromer complex which consists of VPS29, VPS26, VPS35, VPS5 and VPS17. Component of a retromer subcomplex consisting of VPS29, VPS26 and VPS35.

Plays a role in vesicular protein sorting. Required for the endosome-to-Golgi retrieval of the vacuolar protein sorting receptor VPS10. Component of the membrane-associated retromer complex which is essential in endosome-to-Golgi retrograde transport. The VPS29-VPS26-VPS35 subcomplex may be involved in cargo selection. The protein is Carboxypeptidase Y-deficient protein 8 (PEP8) of Saccharomyces cerevisiae (strain ATCC 204508 / S288c) (Baker's yeast).